We begin with the raw amino-acid sequence, 316 residues long: Remorin 4.1 (316 aa).

Disordered stretches follow at residues 1-108 (MLSE…PSEL), 125-202 (NANA…SVGQ), and 267-287 (AQNEVAKARRKAEEKRASAEA). Residues 40–53 (EREEEVVVEEELEE) show a composition bias toward acidic residues. Positions 92-104 (RHTSIRSVGSDTA) are enriched in polar residues. The segment covering 125–135 (NANAAAAAAAN) has biased composition (low complexity). 2 stretches are compositionally biased toward basic and acidic residues: residues 143–153 (GVDDALGRIGE) and 277–287 (KAEEKRASAEA). The stretch at 242 to 288 (VEKANAWLKKYERKLEEKRAKAMEKAQNEVAKARRKAEEKRASAEAK) forms a coiled coil.

This sequence belongs to the remorin family. As to quaternary structure, interacts with BAK1. Phosphorylated by BRI1. Phosphorylation reduces the binding affinity to BAK1. As to expression, expressed in roots, leaf blades and leaf sheaths. Expressed at low levels in stems and spikelets.

Its subcellular location is the cell membrane. Functionally, functions in abscisic acid (ABA) signaling downstream of BZIP23. Acts as antagonistic and negative regulator of brassinosteroid (BR) signaling. Binds to BAK1 and inhibits its interaction with the BR receptor BRI1. Inhibits the formation and subsequent activation of the BRI1-BAK1 receptor complex. This is Remorin 4.1 from Oryza sativa subsp. japonica (Rice).